The chain runs to 407 residues: Carbamoyl phosphate synthase small chain (407 aa).

The segment at 1–205 (MTETTPKTAP…LQDGYGEQDA (205 aa)) is CPSase. L-glutamine is bound by residues Ser60, Gly257, and Gly259. The Glutamine amidotransferase type-1 domain maps to 209–397 (HVVALDFGVK…INLIRERKGQ (189 aa)). The Nucleophile role is filled by Cys286. Positions 287, 290, 328, 330, and 331 each coordinate L-glutamine. Residues His370 and Glu372 contribute to the active site.

The protein belongs to the CarA family. In terms of assembly, composed of two chains; the small (or glutamine) chain promotes the hydrolysis of glutamine to ammonia, which is used by the large (or ammonia) chain to synthesize carbamoyl phosphate. Tetramer of heterodimers (alpha,beta)4.

It catalyses the reaction hydrogencarbonate + L-glutamine + 2 ATP + H2O = carbamoyl phosphate + L-glutamate + 2 ADP + phosphate + 2 H(+). The catalysed reaction is L-glutamine + H2O = L-glutamate + NH4(+). The protein operates within amino-acid biosynthesis; L-arginine biosynthesis; carbamoyl phosphate from bicarbonate: step 1/1. Its pathway is pyrimidine metabolism; UMP biosynthesis via de novo pathway; (S)-dihydroorotate from bicarbonate: step 1/3. In terms of biological role, small subunit of the glutamine-dependent carbamoyl phosphate synthetase (CPSase). CPSase catalyzes the formation of carbamoyl phosphate from the ammonia moiety of glutamine, carbonate, and phosphate donated by ATP, constituting the first step of 2 biosynthetic pathways, one leading to arginine and/or urea and the other to pyrimidine nucleotides. The small subunit (glutamine amidotransferase) binds and cleaves glutamine to supply the large subunit with the substrate ammonia. The protein is Carbamoyl phosphate synthase small chain of Brucella abortus (strain S19).